A 243-amino-acid chain; its full sequence is Cytochrome c1, heme protein (243 aa).

The Mitochondrial intermembrane segment spans residues 1–201 (GVDSHPPALP…CSNPWWDERK (201 aa)). The Cytochrome c domain occupies 5 to 194 (HPPALPWPHF…VTCFLEWCSN (190 aa)). Heme contacts are provided by Cys39, His40, and Met159. Residues 202–221 (LLGYKTIATLAVIAVSSGYY) form a helical membrane-spanning segment. The Mitochondrial matrix segment spans residues 222 to 243 (NRFLSGLWRSRRLAFRPFNYSK).

The protein belongs to the cytochrome c family. In terms of assembly, component of the ubiquinol-cytochrome c oxidoreductase (cytochrome b-c1 complex, complex III, CIII), a multisubunit enzyme composed of 3 respiratory subunits cytochrome b, cytochrome c1 and Rieske protein, 2 core protein subunits, and additional low-molecular weight protein subunits. The complex exists as an obligatory dimer and forms supercomplexes (SCs) in the inner mitochondrial membrane with cytochrome c oxidase (complex IV, CIV). The cofactor is heme.

The protein resides in the mitochondrion inner membrane. It carries out the reaction a quinol + 2 Fe(III)-[cytochrome c](out) = a quinone + 2 Fe(II)-[cytochrome c](out) + 2 H(+)(out). Component of the ubiquinol-cytochrome c oxidoreductase, a multisubunit transmembrane complex that is part of the mitochondrial electron transport chain which drives oxidative phosphorylation. The respiratory chain contains 3 multisubunit complexes succinate dehydrogenase (complex II, CII), ubiquinol-cytochrome c oxidoreductase (cytochrome b-c1 complex, complex III, CIII) and cytochrome c oxidase (complex IV, CIV), that cooperate to transfer electrons derived from NADH and succinate to molecular oxygen, creating an electrochemical gradient over the inner membrane that drives transmembrane transport and the ATP synthase. The cytochrome b-c1 complex catalyzes electron transfer from ubiquinol to cytochrome c, linking this redox reaction to translocation of protons across the mitochondrial inner membrane, with protons being carried across the membrane as hydrogens on the quinol. In the process called Q cycle, 2 protons are consumed from the matrix, 4 protons are released into the intermembrane space and 2 electrons are passed to cytochrome c. Cytochrome c1 is a catalytic core subunit containing a c-type heme. It transfers electrons from the [2Fe-2S] iron-sulfur cluster of the Rieske protein to cytochrome c. The sequence is that of Cytochrome c1, heme protein from Euglena gracilis.